A 249-amino-acid chain; its full sequence is Nodulation protein H (249 aa).

Functionally, required for the formation of sulfated nod factor. Proposed to transfer activated sulfate (PAPS) to a N-acetylglucosamine of the nod factor. This is Nodulation protein H (nodH) from Rhizobium tropici.